A 198-amino-acid polypeptide reads, in one-letter code: Protein UNCMA_24250 (198 aa).

In terms of domain architecture, AMMECR1 spans 5–194; that stretch reads EDGTLAVKTA…ETEPGGPVIE (190 aa).

The sequence is that of Protein UNCMA_24250 from Methanocella arvoryzae (strain DSM 22066 / NBRC 105507 / MRE50).